The chain runs to 330 residues: Ribose-phosphate pyrophosphokinase (330 aa).

Residues D40 to E42 and R99 to Q100 each bind ATP. Mg(2+)-binding residues include H133 and D174. K197 is an active-site residue. Residues R199, D223, and D227 to T231 each bind D-ribose 5-phosphate.

The protein belongs to the ribose-phosphate pyrophosphokinase family. Class I subfamily. Homohexamer. Mg(2+) is required as a cofactor.

It localises to the cytoplasm. It catalyses the reaction D-ribose 5-phosphate + ATP = 5-phospho-alpha-D-ribose 1-diphosphate + AMP + H(+). It functions in the pathway metabolic intermediate biosynthesis; 5-phospho-alpha-D-ribose 1-diphosphate biosynthesis; 5-phospho-alpha-D-ribose 1-diphosphate from D-ribose 5-phosphate (route I): step 1/1. Functionally, involved in the biosynthesis of the central metabolite phospho-alpha-D-ribosyl-1-pyrophosphate (PRPP) via the transfer of pyrophosphoryl group from ATP to 1-hydroxyl of ribose-5-phosphate (Rib-5-P). The protein is Ribose-phosphate pyrophosphokinase of Ureaplasma parvum serovar 3 (strain ATCC 700970).